Consider the following 78-residue polypeptide: Large ribosomal subunit protein bL28 (78 aa).

The segment at 1–28 is disordered; sequence MSAYCQVTGRKPGFGKQVSHSHRHTSRR.

It belongs to the bacterial ribosomal protein bL28 family.

The protein is Large ribosomal subunit protein bL28 of Corynebacterium urealyticum (strain ATCC 43042 / DSM 7109).